A 309-amino-acid chain; its full sequence is Putative S-adenosyl-L-methionine-dependent methyltransferase Mvan_0104 (309 aa).

S-adenosyl-L-methionine-binding positions include Asp134 and 163 to 164; that span reads DL.

Belongs to the UPF0677 family.

Its function is as follows. Exhibits S-adenosyl-L-methionine-dependent methyltransferase activity. This is Putative S-adenosyl-L-methionine-dependent methyltransferase Mvan_0104 from Mycolicibacterium vanbaalenii (strain DSM 7251 / JCM 13017 / BCRC 16820 / KCTC 9966 / NRRL B-24157 / PYR-1) (Mycobacterium vanbaalenii).